Reading from the N-terminus, the 317-residue chain is MIIVTGGAGFIGSNIIKALNQGGREDILVVDDLTQGEKFSNLIDCEIWDYWDKQPFLQAIKAGEEFPHPVDAFIHQGACSATTEWNGRYMMENNFYYSKRLLHYCLERRIPFLYASSAAVYGCGLTFQEHREFEAPRNVYGYSKWLFDQYVRRYLPTASSQIVGLRYFNIYGPREAHKGAMASVAYHAHCQLKETGRIKLFEGCDGYEHGEQRRDFVSVADAAAVNLWFLEHPNQSGIFNVGTGQAQTFNEVAQAVLAFHGHGEIEYIPFPDHLRGRYQSFTQADIHALREAGYAEPFALVEKGVKTYLDWLGKNQD.

Residues 10 to 11, 31 to 32, K38, K53, 76 to 80, and N93 each bind NADP(+); these read FI, DD, and QGACS. The active-site Proton acceptor is the Y140. K144 contributes to the NADP(+) binding site. Residue N169 participates in substrate binding. Positions 170 and 178 each coordinate NADP(+). The active-site Proton acceptor is the K178. Substrate is bound by residues A180, H187, 201–204, R214, and Y278; that span reads FEGC.

This sequence belongs to the NAD(P)-dependent epimerase/dehydratase family. HldD subfamily. As to quaternary structure, homopentamer. NADP(+) serves as cofactor.

The enzyme catalyses ADP-D-glycero-beta-D-manno-heptose = ADP-L-glycero-beta-D-manno-heptose. It participates in nucleotide-sugar biosynthesis; ADP-L-glycero-beta-D-manno-heptose biosynthesis; ADP-L-glycero-beta-D-manno-heptose from D-glycero-beta-D-manno-heptose 7-phosphate: step 4/4. Functionally, catalyzes the interconversion between ADP-D-glycero-beta-D-manno-heptose and ADP-L-glycero-beta-D-manno-heptose via an epimerization at carbon 6 of the heptose. In Nitrosococcus oceani (strain ATCC 19707 / BCRC 17464 / JCM 30415 / NCIMB 11848 / C-107), this protein is ADP-L-glycero-D-manno-heptose-6-epimerase.